Here is a 249-residue protein sequence, read N- to C-terminus: MASSEEDGTNGGASEAGEEKEAPGRRRRLGLLATVWLTFYNIAMTAGWLVLAIAMVRFYMEKGTHKGLYKSIQKTLKFFQTFALLEIVHCLIGIVPTSVIVAGVQVSSRIFMVWLITHSIKPIQNEESVVLFLVAWTVTEITRYSFYTFSLLDHLPYFIKWARYNFFIILYPVGVVGELLTIYAALPYVKKTGMFSIRLPNKYNVSFDYYYFLLITMASYIPLFPQLYFHMLRQRRKVLHGEVIVEKDD.

Residues 1-22 (MASSEEDGTNGGASEAGEEKEA) are disordered. At 1–36 (MASSEEDGTNGGASEAGEEKEAPGRRRRLGLLATVW) the chain is on the cytoplasmic side. A helical membrane pass occupies residues 37–56 (LTFYNIAMTAGWLVLAIAMV). At 57 to 75 (RFYMEKGTHKGLYKSIQKT) the chain is on the lumenal side. Residues 76 to 92 (LKFFQTFALLEIVHCLI) form a helical membrane-spanning segment. Residues 93-102 (GIVPTSVIVA) lie on the Cytoplasmic side of the membrane. The chain crosses the membrane as a helical span at residues 103–120 (GVQVSSRIFMVWLITHSI). At 121–126 (KPIQNE) the chain is on the lumenal side. The chain crosses the membrane as a helical span at residues 127 to 141 (ESVVLFLVAWTVTEI). At 142–164 (TRYSFYTFSLLDHLPYFIKWARY) the chain is on the cytoplasmic side. Residues 165 to 182 (NFFIILYPVGVVGELLTI) form a helical membrane-spanning segment. Active-site residues include Y171 and E178. Over 183-212 (YAALPYVKKTGMFSIRLPNKYNVSFDYYYF) the chain is Lumenal. N204 carries an N-linked (GlcNAc...) asparagine glycan. The helical transmembrane segment at 213 to 230 (LLITMASYIPLFPQLYFH) threads the bilayer. At 231–249 (MLRQRRKVLHGEVIVEKDD) the chain is on the cytoplasmic side.

This sequence belongs to the very long-chain fatty acids dehydratase HACD family. May interact with enzymes of the ELO family (including ELOVL1); with those enzymes that mediate condensation, the first of the four steps of the reaction cycle responsible for fatty acids elongation, may be part of a larger fatty acids elongase complex. Interacts with TECR. As to expression, skeletal muscle.

The protein localises to the endoplasmic reticulum membrane. It catalyses the reaction a very-long-chain (3R)-3-hydroxyacyl-CoA = a very-long-chain (2E)-enoyl-CoA + H2O. The enzyme catalyses (3R)-hydroxyhexadecanoyl-CoA = (2E)-hexadecenoyl-CoA + H2O. The catalysed reaction is (3R)-hydroxyoctadecanoyl-CoA = (2E)-octadecenoyl-CoA + H2O. It carries out the reaction (3R)-hydroxyeicosanoyl-CoA = (2E)-eicosenoyl-CoA + H2O. It catalyses the reaction (3R)-hydroxydocosanoyl-CoA = (2E)-docosenoyl-CoA + H2O. The enzyme catalyses (3R)-hydroxytetracosanoyl-CoA = (2E)-tetracosenoyl-CoA + H2O. The catalysed reaction is (3R)-hydroxyhexacosanoyl-CoA = (2E)-hexacosenoyl-CoA + H2O. It functions in the pathway lipid metabolism; fatty acid biosynthesis. In terms of biological role, catalyzes the third of the four reactions of the long-chain fatty acids elongation cycle. This endoplasmic reticulum-bound enzymatic process, allows the addition of two carbons to the chain of long- and very long-chain fatty acids/VLCFAs per cycle. This enzyme catalyzes the dehydration of the 3-hydroxyacyl-CoA intermediate into trans-2,3-enoyl-CoA, within each cycle of fatty acid elongation. Thereby, it participates in the production of VLCFAs of different chain lengths that are involved in multiple biological processes as precursors of membrane lipids and lipid mediators. The polypeptide is Very-long-chain (3R)-3-hydroxyacyl-CoA dehydratase 1 (HACD1) (Canis lupus familiaris (Dog)).